The following is a 1793-amino-acid chain: Chitin synthase 5 (1793 aa).

The segment at 1–28 is disordered; it reads MTNPRMSMYSLASEAPGGNRGTGQQSTQ. 5 N-linked (GlcNAc...) asparagine glycosylation sites follow: Asn70, Asn164, Asn638, Asn664, and Asn669. The next 2 membrane-spanning stretches (helical) occupy residues 750–770 and 786–806; these read VWVF…LRYV and LVLC…IVAF. The Cytochrome b5 heme-binding domain maps to 815-877; that stretch reads DKAYSQKEVD…GMNLDDYFVA (63 aa). 3 N-linked (GlcNAc...) asparagine glycosylation sites follow: Asn897, Asn1019, and Asn1023. A helical membrane pass occupies residues 1056–1076; it reads LLLAFSIMLCAVILLKFVSAL. N-linked (GlcNAc...) asparagine glycosylation occurs at Asn1421. Transmembrane regions (helical) follow at residues 1452-1472, 1479-1499, and 1507-1527; these read LFGT…IYLV, FPLI…LIFI, and IGWM…LPIY. N-linked (GlcNAc...) asparagine glycosylation is found at Asn1534 and Asn1705. Residues 1735–1791 enclose the DEK-C domain; that stretch reads GPDDGMIVEAIRTVLMEVDLDTVTKKQVRALVEQRLQSELVGERRTFMDRQIDHELA.

Belongs to the chitin synthase family. Class V subfamily.

The protein localises to the cell membrane. It carries out the reaction [(1-&gt;4)-N-acetyl-beta-D-glucosaminyl](n) + UDP-N-acetyl-alpha-D-glucosamine = [(1-&gt;4)-N-acetyl-beta-D-glucosaminyl](n+1) + UDP + H(+). Polymerizes chitin, a structural polymer of the cell wall and septum, by transferring the sugar moiety of UDP-GlcNAc to the non-reducing end of the growing chitin polymer. Regulates Germination and Tolerance to Hyperosmotic Stress. Plays a key role in pathogenicity. Likely contributes to post-penetration virulence. The chain is Chitin synthase 5 from Verticillium dahliae (strain VdLs.17 / ATCC MYA-4575 / FGSC 10137) (Verticillium wilt).